Reading from the N-terminus, the 325-residue chain is 4-hydroxy-3-methylbut-2-enyl diphosphate reductase (325 aa).

C25 lines the [4Fe-4S] cluster pocket. Residues H54 and H87 each contribute to the (2E)-4-hydroxy-3-methylbut-2-enyl diphosphate site. Residues H54 and H87 each contribute to the dimethylallyl diphosphate site. Isopentenyl diphosphate-binding residues include H54 and H87. C109 contacts [4Fe-4S] cluster. A (2E)-4-hydroxy-3-methylbut-2-enyl diphosphate-binding site is contributed by H137. H137 provides a ligand contact to dimethylallyl diphosphate. An isopentenyl diphosphate-binding site is contributed by H137. The Proton donor role is filled by E139. T179 serves as a coordination point for (2E)-4-hydroxy-3-methylbut-2-enyl diphosphate. C209 is a binding site for [4Fe-4S] cluster. (2E)-4-hydroxy-3-methylbut-2-enyl diphosphate contacts are provided by S237, S238, N239, and S282. Residues S237, S238, N239, and S282 each contribute to the dimethylallyl diphosphate site. 4 residues coordinate isopentenyl diphosphate: S237, S238, N239, and S282.

It belongs to the IspH family. Requires [4Fe-4S] cluster as cofactor.

It carries out the reaction isopentenyl diphosphate + 2 oxidized [2Fe-2S]-[ferredoxin] + H2O = (2E)-4-hydroxy-3-methylbut-2-enyl diphosphate + 2 reduced [2Fe-2S]-[ferredoxin] + 2 H(+). The enzyme catalyses dimethylallyl diphosphate + 2 oxidized [2Fe-2S]-[ferredoxin] + H2O = (2E)-4-hydroxy-3-methylbut-2-enyl diphosphate + 2 reduced [2Fe-2S]-[ferredoxin] + 2 H(+). Its pathway is isoprenoid biosynthesis; dimethylallyl diphosphate biosynthesis; dimethylallyl diphosphate from (2E)-4-hydroxy-3-methylbutenyl diphosphate: step 1/1. It functions in the pathway isoprenoid biosynthesis; isopentenyl diphosphate biosynthesis via DXP pathway; isopentenyl diphosphate from 1-deoxy-D-xylulose 5-phosphate: step 6/6. Functionally, catalyzes the conversion of 1-hydroxy-2-methyl-2-(E)-butenyl 4-diphosphate (HMBPP) into a mixture of isopentenyl diphosphate (IPP) and dimethylallyl diphosphate (DMAPP). Acts in the terminal step of the DOXP/MEP pathway for isoprenoid precursor biosynthesis. The chain is 4-hydroxy-3-methylbut-2-enyl diphosphate reductase from Corynebacterium glutamicum (strain ATCC 13032 / DSM 20300 / JCM 1318 / BCRC 11384 / CCUG 27702 / LMG 3730 / NBRC 12168 / NCIMB 10025 / NRRL B-2784 / 534).